The primary structure comprises 240 residues: MATLFIADLHLCVEEPAITAGFLRFLAGEARKADALYILGDLFEAWIGDDDPNPLHRQMAAAIKAVSDSGVPCYFIHGNRDFLLGKRFARESGMTLLPEEKVLELYGRRVLIMHGDTLCTDDAGYQAFRAKVHKPWLQTLFLALPLFVRKRIAARMRANSKEANSSKSLAIMDVNQNAVVSAMEKHQVQWLIHGHTHRPAVHELIANQQPAFRVVLGAWHTEGSMVKVTADDVELIHFPF.

Mn(2+) contacts are provided by Asp8, His10, Asp41, Asn79, and His114. 79–80 (NR) is a binding site for substrate. Substrate-binding residues include Asp122, Ser160, Asn164, Lys167, and His195. Positions 195 and 197 each coordinate Mn(2+).

It belongs to the LpxH family. Requires Mn(2+) as cofactor.

The protein resides in the cell inner membrane. It catalyses the reaction UDP-2-N,3-O-bis[(3R)-3-hydroxytetradecanoyl]-alpha-D-glucosamine + H2O = 2-N,3-O-bis[(3R)-3-hydroxytetradecanoyl]-alpha-D-glucosaminyl 1-phosphate + UMP + 2 H(+). It functions in the pathway glycolipid biosynthesis; lipid IV(A) biosynthesis; lipid IV(A) from (3R)-3-hydroxytetradecanoyl-[acyl-carrier-protein] and UDP-N-acetyl-alpha-D-glucosamine: step 4/6. Hydrolyzes the pyrophosphate bond of UDP-2,3-diacylglucosamine to yield 2,3-diacylglucosamine 1-phosphate (lipid X) and UMP by catalyzing the attack of water at the alpha-P atom. Involved in the biosynthesis of lipid A, a phosphorylated glycolipid that anchors the lipopolysaccharide to the outer membrane of the cell. This Escherichia coli (strain SE11) protein is UDP-2,3-diacylglucosamine hydrolase.